The following is a 179-amino-acid chain: Large ribosomal subunit protein uL5 (179 aa).

The protein belongs to the universal ribosomal protein uL5 family. As to quaternary structure, part of the 50S ribosomal subunit; part of the 5S rRNA/L5/L18/L25 subcomplex. Contacts the 5S rRNA and the P site tRNA. Forms a bridge to the 30S subunit in the 70S ribosome.

In terms of biological role, this is one of the proteins that bind and probably mediate the attachment of the 5S RNA into the large ribosomal subunit, where it forms part of the central protuberance. In the 70S ribosome it contacts protein S13 of the 30S subunit (bridge B1b), connecting the 2 subunits; this bridge is implicated in subunit movement. Contacts the P site tRNA; the 5S rRNA and some of its associated proteins might help stabilize positioning of ribosome-bound tRNAs. The protein is Large ribosomal subunit protein uL5 of Rickettsia akari (strain Hartford).